The sequence spans 431 residues: Septin-11 (431 aa).

N-acetylalanine is present on Ala2. Position 9 is a phosphoserine (Ser9). One can recognise a Septin-type G domain in the interval 38 to 304; that stretch reads QGFCFNILCV…ELYRRCKLEE (267 aa). Positions 48–55 are G1 motif; sequence GETGIGKS. GTP is bound by residues 48 to 55, Gly103, 184 to 192, Gly238, and Arg253; these read GETGIGKS and KADTIAKNE. The tract at residues 100–103 is G3 motif; it reads DTVG. Residues 183 to 186 form a G4 motif region; it reads AKAD. The stretch at 320-413 forms a coiled coil; the sequence is QETYEAKRNE…LLQSQAQQSG (94 aa). The interval 400–431 is disordered; the sequence is AAAQLLQSQAQQSGAQQTKKDKDKKNPWLCTE. Residues 401–416 are compositionally biased toward low complexity; the sequence is AAQLLQSQAQQSGAQQ.

This sequence belongs to the TRAFAC class TrmE-Era-EngA-EngB-Septin-like GTPase superfamily. Septin GTPase family. In terms of assembly, septins polymerize into heterooligomeric protein complexes that form filaments, and can associate with cellular membranes, actin filaments and microtubules. Forms homooligomers. GTPase activity is required for filament formation. Interacts with SEPTIN7, SEPTIN9 and SEPTIN12. Expressed in the cerebral cortex (at protein level).

Its subcellular location is the cytoplasm. It is found in the cytoskeleton. The protein localises to the synapse. The protein resides in the cell projection. It localises to the dendritic spine. Its subcellular location is the axon. In terms of biological role, filament-forming cytoskeletal GTPase. May play a role in cytokinesis (Potential). May play a role in the cytoarchitecture of neurons, including dendritic arborization and dendritic spines, and in GABAergic synaptic connectivity. The polypeptide is Septin-11 (Mus musculus (Mouse)).